Consider the following 202-residue polypeptide: Apolipoprotein R (202 aa).

The first 28 residues, 1 to 28, serve as a signal peptide directing secretion; it reads MPPNLQRIFPALCLLGVLFLLHCTPVLC. Sushi domains are found at residues 29 to 87 and 88 to 145; these read GCDN…QCKA and LCPK…KCEW. Disulfide bonds link Cys-30/Cys-73, Cys-59/Cys-85, Cys-89/Cys-130, and Cys-116/Cys-143.

Forms high molecular weight disulfide-linked complexes. Plasma. Found on very low-density lipoprotein (VLDL), on chylomicrons, and in the D &gt; 1.21 g/ml fraction of pig plasma. Found in liver, spleen, lung, bone marrow and lymph node.

The protein resides in the secreted. May be a lipoprotein-borne regulator of either the coagulation or the complement cascades. The chain is Apolipoprotein R (APOR) from Sus scrofa (Pig).